Here is a 179-residue protein sequence, read N- to C-terminus: Large ribosomal subunit protein uL6 (179 aa).

This sequence belongs to the universal ribosomal protein uL6 family. As to quaternary structure, part of the 50S ribosomal subunit.

Its function is as follows. This protein binds to the 23S rRNA, and is important in its secondary structure. It is located near the subunit interface in the base of the L7/L12 stalk, and near the tRNA binding site of the peptidyltransferase center. This Mycolicibacterium vanbaalenii (strain DSM 7251 / JCM 13017 / BCRC 16820 / KCTC 9966 / NRRL B-24157 / PYR-1) (Mycobacterium vanbaalenii) protein is Large ribosomal subunit protein uL6.